A 416-amino-acid polypeptide reads, in one-letter code: Geranyl diphosphate synthase (416 aa).

Mg(2+) contacts are provided by Asp-157 and Asp-161. The DDXXD motif motif lies at 157 to 161; it reads DDIMD.

The protein belongs to the FPP/GGPP synthase family. Requires Mg(2+) as cofactor. As to expression, specifically expressed in the anterior midgut of male beetles, the site of aggregation pheromone biosynthesis.

The catalysed reaction is isopentenyl diphosphate + dimethylallyl diphosphate = (2E)-geranyl diphosphate + diphosphate. Its pathway is pheromone biosynthesis. In terms of biological role, geranyl diphosphate synthase involved in pheromone biosynthesis. The protein is Geranyl diphosphate synthase of Ips pini (Pine engraver beetle).